The following is a 482-amino-acid chain: Probable glycine dehydrogenase (decarboxylating) subunit 2 (482 aa).

Lysine 267 is modified (N6-(pyridoxal phosphate)lysine).

This sequence belongs to the GcvP family. C-terminal subunit subfamily. As to quaternary structure, the glycine cleavage system is composed of four proteins: P, T, L and H. In this organism, the P 'protein' is a heterodimer of two subunits. Pyridoxal 5'-phosphate serves as cofactor.

It carries out the reaction N(6)-[(R)-lipoyl]-L-lysyl-[glycine-cleavage complex H protein] + glycine + H(+) = N(6)-[(R)-S(8)-aminomethyldihydrolipoyl]-L-lysyl-[glycine-cleavage complex H protein] + CO2. Its function is as follows. The glycine cleavage system catalyzes the degradation of glycine. The P protein binds the alpha-amino group of glycine through its pyridoxal phosphate cofactor; CO(2) is released and the remaining methylamine moiety is then transferred to the lipoamide cofactor of the H protein. The sequence is that of Probable glycine dehydrogenase (decarboxylating) subunit 2 from Aquifex aeolicus (strain VF5).